Reading from the N-terminus, the 392-residue chain is Putative cystathionine gamma-lyase 2 (392 aa).

The segment at 32–55 (LSSTYKQDNPGEPKGHDYSRAGNP) is disordered. A compositionally biased stretch (basic and acidic residues) spans 40–50 (NPGEPKGHDYS). Substrate is bound by residues Arg51, Tyr103, and Arg108. Residue Lys203 is modified to N6-(pyridoxal phosphate)lysine. Glu330 serves as a coordination point for substrate.

This sequence belongs to the trans-sulfuration enzymes family. The cofactor is pyridoxal 5'-phosphate.

The protein localises to the cytoplasm. The enzyme catalyses L,L-cystathionine + H2O = 2-oxobutanoate + L-cysteine + NH4(+). Its pathway is amino-acid biosynthesis; L-cysteine biosynthesis; L-cysteine from L-homocysteine and L-serine: step 2/2. This chain is Putative cystathionine gamma-lyase 2 (cth-2), found in Caenorhabditis elegans.